A 1034-amino-acid polypeptide reads, in one-letter code: Glycine dehydrogenase (decarboxylating), mitochondrial (1034 aa).

A mitochondrion-targeting transit peptide spans 1–63 (MERARRLAML…LNGFGSQVRT (63 aa)). An N6-(pyridoxal phosphate)lysine modification is found at Lys770.

It belongs to the GcvP family. Homodimer. The glycine cleavage system is composed of four proteins: P, T, L and H. The cofactor is pyridoxal 5'-phosphate.

The protein resides in the mitochondrion. The enzyme catalyses N(6)-[(R)-lipoyl]-L-lysyl-[glycine-cleavage complex H protein] + glycine + H(+) = N(6)-[(R)-S(8)-aminomethyldihydrolipoyl]-L-lysyl-[glycine-cleavage complex H protein] + CO2. Its function is as follows. The glycine cleavage system catalyzes the degradation of glycine. The P protein binds the alpha-amino group of glycine through its pyridoxal phosphate cofactor; CO(2) is released and the remaining methylamine moiety is then transferred to the lipoamide cofactor of the H protein. The polypeptide is Glycine dehydrogenase (decarboxylating), mitochondrial (GDCSP) (Flaveria anomala (Yellowtops)).